The following is a 199-amino-acid chain: MIKLIVGLGNPGAEYEATRHNAGFWLVDQLARMGGTTLRVEGRFHGLAGRARLWDQDIWLLKPSTFMNRSGLAVVSLARFYKILPDEIVVAHDEMDLPPGAAKLKRGGGAGGHNGLKDIAAHLTTQEFWRLRLGVGHPRNLPGGAGAGREDVVNFVLKPPRKEEQQAIDEAIDRSIDPLGLLARGDAERAMAQLHTVAR.

Position 15 (Y15) interacts with tRNA. H20 functions as the Proton acceptor in the catalytic mechanism. TRNA is bound by residues F66, N68, and N114.

Belongs to the PTH family. In terms of assembly, monomer.

The protein resides in the cytoplasm. The enzyme catalyses an N-acyl-L-alpha-aminoacyl-tRNA + H2O = an N-acyl-L-amino acid + a tRNA + H(+). Hydrolyzes ribosome-free peptidyl-tRNAs (with 1 or more amino acids incorporated), which drop off the ribosome during protein synthesis, or as a result of ribosome stalling. Functionally, catalyzes the release of premature peptidyl moieties from peptidyl-tRNA molecules trapped in stalled 50S ribosomal subunits, and thus maintains levels of free tRNAs and 50S ribosomes. This Cupriavidus pinatubonensis (strain JMP 134 / LMG 1197) (Cupriavidus necator (strain JMP 134)) protein is Peptidyl-tRNA hydrolase.